The following is an 83-amino-acid chain: U25-theraphotoxin-Cg1a (83 aa).

Positions 1-23 are cleaved as a signal peptide; sequence MRFHTLLFLSFLLLVSCALICTA. Residues 24-48 constitute a propeptide that is removed on maturation; it reads QHPGLKKSGMFHENVGKGQHIEKKR. Disulfide bonds link cysteine 50-cysteine 66, cysteine 57-cysteine 71, and cysteine 65-cysteine 81.

This sequence belongs to the neurotoxin 07 (Beta/delta-agtx) family. 03 (aga-4) subfamily. JZTX sub-subfamily. In terms of tissue distribution, expressed by the venom gland.

Its subcellular location is the secreted. Functionally, inhibits TTX-sensitive sodium currents in rat dorsal root ganglion (DRG) neurons. This is U25-theraphotoxin-Cg1a from Chilobrachys guangxiensis (Chinese earth tiger tarantula).